Consider the following 75-residue polypeptide: Protein RegB (75 aa).

Its function is as follows. Required for optimal exotoxin A production. This chain is Protein RegB (regB), found in Pseudomonas aeruginosa (strain ATCC 15692 / DSM 22644 / CIP 104116 / JCM 14847 / LMG 12228 / 1C / PRS 101 / PAO1).